A 459-amino-acid chain; its full sequence is XK-related protein 3 (459 aa).

Transmembrane regions (helical) follow at residues 35-55, 68-88, 97-117, 169-189, 199-219, 238-258, 264-284, 300-320, 345-365, and 377-397; these read FSII…LYMF, SFTI…LMFF, AALL…LHTI, IQAF…SLTI, LMTF…ILAI, VVMW…FFIA, SLPV…LEFW, MVGT…INFS, ILHY…FRFF, and LIAV…LLFY.

It belongs to the XK family. In terms of tissue distribution, expressed predominantly, if not exclusively, in testis.

Its subcellular location is the cell membrane. The protein is XK-related protein 3 (XKR3) of Homo sapiens (Human).